The following is a 195-amino-acid chain: Imidazoleglycerol-phosphate dehydratase (195 aa).

This sequence belongs to the imidazoleglycerol-phosphate dehydratase family.

It is found in the cytoplasm. It catalyses the reaction D-erythro-1-(imidazol-4-yl)glycerol 3-phosphate = 3-(imidazol-4-yl)-2-oxopropyl phosphate + H2O. The protein operates within amino-acid biosynthesis; L-histidine biosynthesis; L-histidine from 5-phospho-alpha-D-ribose 1-diphosphate: step 6/9. In Bordetella avium (strain 197N), this protein is Imidazoleglycerol-phosphate dehydratase.